A 614-amino-acid polypeptide reads, in one-letter code: Dihydroxy-acid dehydratase (614 aa).

Aspartate 81 contacts Mg(2+). Residue cysteine 122 coordinates [2Fe-2S] cluster. Mg(2+) contacts are provided by aspartate 123 and lysine 124. Position 124 is an N6-carboxylysine (lysine 124). Residue cysteine 193 participates in [2Fe-2S] cluster binding. Glutamate 489 is a binding site for Mg(2+). Serine 515 serves as the catalytic Proton acceptor.

Belongs to the IlvD/Edd family. Homodimer. [2Fe-2S] cluster is required as a cofactor. It depends on Mg(2+) as a cofactor.

It catalyses the reaction (2R)-2,3-dihydroxy-3-methylbutanoate = 3-methyl-2-oxobutanoate + H2O. The enzyme catalyses (2R,3R)-2,3-dihydroxy-3-methylpentanoate = (S)-3-methyl-2-oxopentanoate + H2O. It participates in amino-acid biosynthesis; L-isoleucine biosynthesis; L-isoleucine from 2-oxobutanoate: step 3/4. It functions in the pathway amino-acid biosynthesis; L-valine biosynthesis; L-valine from pyruvate: step 3/4. In terms of biological role, functions in the biosynthesis of branched-chain amino acids. Catalyzes the dehydration of (2R,3R)-2,3-dihydroxy-3-methylpentanoate (2,3-dihydroxy-3-methylvalerate) into 2-oxo-3-methylpentanoate (2-oxo-3-methylvalerate) and of (2R)-2,3-dihydroxy-3-methylbutanoate (2,3-dihydroxyisovalerate) into 2-oxo-3-methylbutanoate (2-oxoisovalerate), the penultimate precursor to L-isoleucine and L-valine, respectively. This Saccharophagus degradans (strain 2-40 / ATCC 43961 / DSM 17024) protein is Dihydroxy-acid dehydratase.